A 1371-amino-acid polypeptide reads, in one-letter code: uncharacterized protein (1371 aa).

The segment at 1020 to 1048 (WYLSSSKNTPEPRPDPEPTPEGHDNNLRP) is disordered. Positions 1029–1046 (PEPRPDPEPTPEGHDNNL) are enriched in basic and acidic residues. The region spanning 1083 to 1371 (GEPKATSMWM…SAMLGVKYTF (289 aa)) is the Autotransporter domain.

It is found in the cell outer membrane. This is an uncharacterized protein from Escherichia coli (strain K12).